The sequence spans 270 residues: Tryptophan synthase alpha chain (270 aa).

Residues E49 and D60 each act as proton acceptor in the active site.

The protein belongs to the TrpA family. In terms of assembly, tetramer of two alpha and two beta chains.

It catalyses the reaction (1S,2R)-1-C-(indol-3-yl)glycerol 3-phosphate + L-serine = D-glyceraldehyde 3-phosphate + L-tryptophan + H2O. Its pathway is amino-acid biosynthesis; L-tryptophan biosynthesis; L-tryptophan from chorismate: step 5/5. The alpha subunit is responsible for the aldol cleavage of indoleglycerol phosphate to indole and glyceraldehyde 3-phosphate. This chain is Tryptophan synthase alpha chain, found in Pseudomonas fluorescens (strain Pf0-1).